The following is a 286-amino-acid chain: Thymidylate synthase (286 aa).

Residue 140 to 141 (RR) participates in dUMP binding. Catalysis depends on cysteine 161, which acts as the Nucleophile. DUMP is bound by residues 185–188 (RSND), asparagine 196, and 226–228 (HIY). Aspartate 188 contacts (6R)-5,10-methylene-5,6,7,8-tetrahydrofolate. Alanine 285 provides a ligand contact to (6R)-5,10-methylene-5,6,7,8-tetrahydrofolate.

This sequence belongs to the thymidylate synthase family. Bacterial-type ThyA subfamily. As to quaternary structure, homodimer.

Its subcellular location is the cytoplasm. The catalysed reaction is dUMP + (6R)-5,10-methylene-5,6,7,8-tetrahydrofolate = 7,8-dihydrofolate + dTMP. Its pathway is pyrimidine metabolism; dTTP biosynthesis. Catalyzes the reductive methylation of 2'-deoxyuridine-5'-monophosphate (dUMP) to 2'-deoxythymidine-5'-monophosphate (dTMP) while utilizing 5,10-methylenetetrahydrofolate (mTHF) as the methyl donor and reductant in the reaction, yielding dihydrofolate (DHF) as a by-product. This enzymatic reaction provides an intracellular de novo source of dTMP, an essential precursor for DNA biosynthesis. This chain is Thymidylate synthase, found in Streptococcus thermophilus (strain ATCC BAA-491 / LMD-9).